The chain runs to 161 residues: Nucleotide-binding protein Csal_2524 (161 aa).

This sequence belongs to the YajQ family.

Functionally, nucleotide-binding protein. In Chromohalobacter salexigens (strain ATCC BAA-138 / DSM 3043 / CIP 106854 / NCIMB 13768 / 1H11), this protein is Nucleotide-binding protein Csal_2524.